Consider the following 906-residue polypeptide: MNPLKILIWNANGISRKAKDVELFAHNKKVDILLVTELRLKRGETVKIYGYAYYPAYRPSLNNNSVGGVAVFVRTTLRHFPQRVIETRHIQLSSVKVATGLGDLQFSAIYCSPSTRIEERHFTDIIRACGQRYLVGGDWNARHWLWGDTCNSPRGRELAEALSVTGAKILATGSPTRYPYVPSHTPSCIDFAVYHGIPDHLATITQSWDLDSDHLPLIISIETDSTHVNPSPRLVTKHTDLLAFSRQLESLISLNTTLNSGEEIEMAVDNLTESIHRAAAVSTSPVPRIGTTYGIVLTREARELLTQKRRLRRRAIRSQDPWDRLLWNRAAKQLRNVLRELRSNFFEQKLASMDYTVDAGYSLWKCTKSLKRQPFRQVPIRCPGGELAKNEEEQANCFANHLETRFTHFQFATTEQYQETLDSLETPLQMSLPIKPIRVEEIVEAIKSLPLKKSPGIDNVCNATLKALPVRAILYLALIYNAILRVQFFPKQWKMAAILMIHKPGKPEESPESYRPISLLSSLSKLWERLIANRLNDIMTERRILPDHQFGFRQGHSTVEQVHRLTKHILQAFDDKEYCNAVFIDMQQAFDRVWHDGLISKVKKLFPAPYYGVLKSYLEDRRFMVRVRNSYSIPRVMRAGVPQGSVLGPLLYSVFTADLPCPNAYHMADPRKALLATYADDIALLYSSNCCNEAARGLQEYLTTLAAWCKRWILKVNPQKTINPCFTLKTLSPVTAPIELEGVILDQPSQAKYLGITLDKRLTFGPHLKATTRRCYQRMQQLRWLLNRKSTMTLRAKRAVYVHCVAPIWLYGIQIWGIAAKSNYNRIQVLQNRAMRAITDCPYYVRGTTLHRDLNLHTVEEQISRHTSRYSDRLRRHHSILARRLLPARPLRRLKRKGFAKTLGQP.

In terms of domain architecture, Reverse transcriptase spans 482 to 758; sequence AILRVQFFPK…SQAKYLGITL (277 aa).

It depends on Mg(2+) as a cofactor. The cofactor is Mn(2+).

The enzyme catalyses DNA(n) + a 2'-deoxyribonucleoside 5'-triphosphate = DNA(n+1) + diphosphate. This is Probable RNA-directed DNA polymerase from transposon BS from Drosophila melanogaster (Fruit fly).